The primary structure comprises 426 residues: Putative acid phosphatase 1 (426 aa).

Positions 1–18 (MRVLFYVFPFVIFALSQA) are cleaved as a signal peptide. At 19-388 (QLISVHVIFR…HNWTMTTVSW (370 aa)) the chain is on the extracellular side. The Nucleophile role is filled by His-29. N-linked (GlcNAc...) asparagine glycans are attached at residues Asn-37 and Asn-145. A disulfide bridge connects residues Cys-133 and Cys-369. Asp-276 acts as the Proton donor in catalysis. An N-linked (GlcNAc...) asparagine glycan is attached at Asn-380. Residues 389-409 (ILIGISAFLLIILIIMSYLAV) traverse the membrane as a helical segment. The Cytoplasmic portion of the chain corresponds to 410 to 426 (RYKNRSVVTIKKVCLEN).

Belongs to the histidine acid phosphatase family.

The protein localises to the membrane. The catalysed reaction is a phosphate monoester + H2O = an alcohol + phosphate. The sequence is that of Putative acid phosphatase 1 from Caenorhabditis briggsae.